The primary structure comprises 412 residues: Transforming growth factor beta-3 proprotein (412 aa).

Positions Met1–Ser23 are cleaved as a signal peptide. N-linked (GlcNAc...) asparagine glycosylation is found at Asn74, Asn135, and Asn142. The short motif at Arg261–Asp263 is the Cell attachment site element. Gln293 carries the post-translational modification N5-methylglutamine. 4 disulfides stabilise this stretch: Cys307–Cys316, Cys315–Cys378, Cys344–Cys409, and Cys348–Cys411.

It belongs to the TGF-beta family. Interacts with ASPN. Latency-associated peptide: Homodimer; disulfide-linked. Latency-associated peptide: Interacts with Transforming growth factor beta-3 (TGF-beta-3) chain; interaction is non-covalent and maintains (TGF-beta-3) in a latent state. Latency-associated peptide: Interacts with LRRC32/GARP; leading to regulate activation of TGF-beta-3 and promote epithelial fusion during palate development. Latency-associated peptide: Interacts (via cell attachment site) with integrins, leading to release of the active TGF-beta-3. Transforming growth factor beta-3: Homodimer; disulfide-linked. Transforming growth factor beta-3: Interacts with TGF-beta receptors (TGFBR1 and TGFBR2), leading to signal transduction. In terms of processing, transforming growth factor beta-3 proprotein: The precursor proprotein is cleaved in the Golgi apparatus to form Transforming growth factor beta-3 (TGF-beta-3) and Latency-associated peptide (LAP) chains, which remain non-covalently linked, rendering TGF-beta-3 inactive. Post-translationally, methylated at Gln-293 by N6AMT1. As to expression, expressed in cardiomyocytes.

The protein localises to the secreted. Its subcellular location is the extracellular space. The protein resides in the extracellular matrix. In terms of biological role, transforming growth factor beta-3 proprotein: Precursor of the Latency-associated peptide (LAP) and Transforming growth factor beta-3 (TGF-beta-3) chains, which constitute the regulatory and active subunit of TGF-beta-3, respectively. Its function is as follows. Required to maintain the Transforming growth factor beta-3 (TGF-beta-3) chain in a latent state during storage in extracellular matrix. Associates non-covalently with TGF-beta-3 and regulates its activation via interaction with 'milieu molecules', such as LTBP1 and LRRC32/GARP, that control activation of TGF-beta-3. Interaction with integrins results in distortion of the Latency-associated peptide chain and subsequent release of the active TGF-beta-3. Transforming growth factor beta-3: Multifunctional protein that regulates embryogenesis and cell differentiation and is required in various processes such as secondary palate development. Activation into mature form follows different steps: following cleavage of the proprotein in the Golgi apparatus, Latency-associated peptide (LAP) and Transforming growth factor beta-3 (TGF-beta-3) chains remain non-covalently linked rendering TGF-beta-3 inactive during storage in extracellular matrix. At the same time, LAP chain interacts with 'milieu molecules', such as LTBP1 and LRRC32/GARP that control activation of TGF-beta-3 and maintain it in a latent state during storage in extracellular milieus. TGF-beta-3 is released from LAP by integrins: integrin-binding results in distortion of the LAP chain and subsequent release of the active TGF-beta-3. Once activated following release of LAP, TGF-beta-3 acts by binding to TGF-beta receptors (TGFBR1 and TGFBR2), which transduce signal. The sequence is that of Transforming growth factor beta-3 proprotein (Tgfb3) from Rattus norvegicus (Rat).